Consider the following 279-residue polypeptide: Large ribosomal subunit protein uL3 (279 aa).

An N5-methylglutamine modification is found at Gln151.

The protein belongs to the universal ribosomal protein uL3 family. As to quaternary structure, part of the 50S ribosomal subunit. Forms a cluster with proteins L14 and L19. Post-translationally, methylated by PrmB.

One of the primary rRNA binding proteins, it binds directly near the 3'-end of the 23S rRNA, where it nucleates assembly of the 50S subunit. The chain is Large ribosomal subunit protein uL3 from Dinoroseobacter shibae (strain DSM 16493 / NCIMB 14021 / DFL 12).